The following is a 299-amino-acid chain: Deoxyhypusine hydroxylase (299 aa).

5 HEAT-like PBS-type repeats span residues 54–80 (LKHE…VLQD), 87–113 (VRHE…YSED), 174–200 (DRYR…GLRA), 205–231 (FRHE…ALRS), and 238–264 (VRHE…FAQD). Residues H56, H89, and E90 each coordinate Fe cation. Fe cation-binding residues include H207, H240, and E241.

It belongs to the deoxyhypusine hydroxylase family. Requires Fe(2+) as cofactor.

The enzyme catalyses [eIF5A protein]-deoxyhypusine + AH2 + O2 = [eIF5A protein]-hypusine + A + H2O. It participates in protein modification; eIF5A hypusination. Catalyzes the hydroxylation of the N(6)-(4-aminobutyl)-L-lysine intermediate produced by deoxyhypusine synthase/DHPS on a critical lysine of the eukaryotic translation initiation factor 5A/eIF-5A. This is the second step of the post-translational modification of that lysine into an unusual amino acid residue named hypusine. Hypusination is unique to mature eIF-5A factor and is essential for its function. This chain is Deoxyhypusine hydroxylase, found in Gallus gallus (Chicken).